We begin with the raw amino-acid sequence, 169 residues long: S-ribosylhomocysteine lyase (169 aa).

3 residues coordinate Fe cation: His54, His58, and Cys128.

Belongs to the LuxS family. As to quaternary structure, homodimer. Fe cation is required as a cofactor.

The enzyme catalyses S-(5-deoxy-D-ribos-5-yl)-L-homocysteine = (S)-4,5-dihydroxypentane-2,3-dione + L-homocysteine. In terms of biological role, involved in the synthesis of autoinducer 2 (AI-2) which is secreted by bacteria and is used to communicate both the cell density and the metabolic potential of the environment. The regulation of gene expression in response to changes in cell density is called quorum sensing. Catalyzes the transformation of S-ribosylhomocysteine (RHC) to homocysteine (HC) and 4,5-dihydroxy-2,3-pentadione (DPD). This Tolumonas auensis (strain DSM 9187 / NBRC 110442 / TA 4) protein is S-ribosylhomocysteine lyase.